A 131-amino-acid chain; its full sequence is Small ribosomal subunit protein uS8 (131 aa).

Belongs to the universal ribosomal protein uS8 family. As to quaternary structure, part of the 30S ribosomal subunit. Contacts proteins S5 and S12.

In terms of biological role, one of the primary rRNA binding proteins, it binds directly to 16S rRNA central domain where it helps coordinate assembly of the platform of the 30S subunit. The sequence is that of Small ribosomal subunit protein uS8 from Phocaeicola vulgatus (strain ATCC 8482 / DSM 1447 / JCM 5826 / CCUG 4940 / NBRC 14291 / NCTC 11154) (Bacteroides vulgatus).